Reading from the N-terminus, the 464-residue chain is Fumarate hydratase class II (464 aa).

Substrate contacts are provided by residues 96–98 (SGT), 127–130 (HPND), 137–139 (SSN), and T185. H186 functions as the Proton donor/acceptor in the catalytic mechanism. The active site involves S316. Substrate is bound by residues S317 and 322–324 (KVN).

This sequence belongs to the class-II fumarase/aspartase family. Fumarase subfamily. As to quaternary structure, homotetramer.

It localises to the cytoplasm. It catalyses the reaction (S)-malate = fumarate + H2O. It participates in carbohydrate metabolism; tricarboxylic acid cycle; (S)-malate from fumarate: step 1/1. Functionally, involved in the TCA cycle. Catalyzes the stereospecific interconversion of fumarate to L-malate. In Pseudomonas putida (strain ATCC 47054 / DSM 6125 / CFBP 8728 / NCIMB 11950 / KT2440), this protein is Fumarate hydratase class II.